We begin with the raw amino-acid sequence, 590 residues long: Nuclear receptor subfamily 2 group C member 1 (590 aa).

Residues 1 to 166 (MATIEEIAHQ…RLQRCIAFGM (166 aa)) form a required for interaction with KAT2B region. A DNA-binding region (nuclear receptor) is located at residues 98–173 (FDLCVVCGDK…FGMKQDSVQC (76 aa)). NR C4-type zinc fingers lie at residues 101–121 (CVVC…CEGC) and 137–156 (CRGS…CQYC). Phosphoserine occurs at positions 185 and 203. Thr208 is subject to Phosphothreonine. Position 210 is a phosphothreonine; by MAPK1 (Thr210). Residue Lys238 forms a Glycyl lysine isopeptide (Lys-Gly) (interchain with G-Cter in SUMO); alternate linkage. Lys238 is covalently cross-linked (Glycyl lysine isopeptide (Lys-Gly) (interchain with G-Cter in SUMO2); alternate). One can recognise an NR LBD domain in the interval 333-577 (ESMEGSTHLI…SVIPHILKME (245 aa)). Ser568 carries the phosphoserine; by PKC modification. Positions 571–590 (PHILKMEPADYNSQIIGHSL) are required for interaction with NRIP1. Lys575 participates in a covalent cross-link: Glycyl lysine isopeptide (Lys-Gly) (interchain with G-Cter in SUMO2).

The protein belongs to the nuclear hormone receptor family. NR2 subfamily. As to quaternary structure, homodimer. Heterodimer; with NR2C2 which is required for chromatin remodeling and for binding to promoter regions such as globin DR1 repeats. Interacts with ESR1; the interaction prevents homodimerization of ESR1 and suppresses its transcriptional activity and cell growth. Interacts with NRIP1 (via its LXXLL motifs); the interaction provides corepressor activity. Interacts with HDAC3 (via the DNA-binding domain); the interaction recruits phosphorylated NR2C1 to PML bodies for sumoylation. Interacts with HDAC4 (via the DNA-binding domain). Interacts with PIAS1; the interaction is required for sumoylation of NR2C1. Interacts with UBE2I; the interaction is required for sumoylation of NR2C1. Interacts with KAT2B; the interaction acts as a corepressor of gene expression. In terms of processing, sumoylation requires both PIAS1 and UBE2I. Sumoylation appears to dissociate NR2C1 from the PML nuclear bodies. Enhances the interaction with NRIP1 but inhibits interaction with KAT2B. In proliferating cells, stimulation by all-trans retinoic acid, activation of MAPK1-mediated phosphorylation and recruitment to PML bodies with subsequent sumoylation, suppresses OCT4 expression. Post-translationally, phosphorylated on several serine and threonine residues. Phosphorylation on Thr-210, stimulated by all-trans retinoic acid (atRA) mediates PML location and sumoylation in proliferating cells which then modulates its association with effector molecules, KAT2B and NRIP1. Phosphorylation on Ser-568 by PKC is important for protein stability and function as activator of RARB.

It is found in the nucleus. Its subcellular location is the PML body. Its function is as follows. Orphan nuclear receptor. Binds the IR7 element in the promoter of its own gene in an autoregulatory negative feedback mechanism. Primarily repressor of a broad range of genes including ESR1 and RARB. Together with NR2C2, forms the core of the DRED (direct repeat erythroid-definitive) complex that represses embryonic and fetal globin transcription. Binds to hormone response elements (HREs) consisting of two 5'-AGGTCA-3' half site direct repeat consensus sequences. Also activator of OCT4 gene expression. Plays a fundamental role in early embryogenesis and regulates embryonic stem cell proliferation and differentiation. Mediator of retinoic acid-regulated preadipocyte proliferation. The polypeptide is Nuclear receptor subfamily 2 group C member 1 (Nr2c1) (Rattus norvegicus (Rat)).